Reading from the N-terminus, the 498-residue chain is Lysine--tRNA ligase (498 aa).

Mg(2+)-binding residues include Glu-401 and Glu-408.

This sequence belongs to the class-II aminoacyl-tRNA synthetase family. As to quaternary structure, homodimer. Mg(2+) serves as cofactor.

It localises to the cytoplasm. The enzyme catalyses tRNA(Lys) + L-lysine + ATP = L-lysyl-tRNA(Lys) + AMP + diphosphate. This chain is Lysine--tRNA ligase, found in Dehalococcoides mccartyi (strain ATCC BAA-2266 / KCTC 15142 / 195) (Dehalococcoides ethenogenes (strain 195)).